The chain runs to 897 residues: MNKNYKDTLLMPSTDFEMKANLATKESKIQQKWLDDQIYQLRLEKNQNNEQKILHDGPPYANGDIHVGHTMNKILKDVIVRRWLMQGYYSPFILGWDTHGLPIEHAVQSKLGQKEFFKLSVLERIEVCRDFAFNQVQKQKEQFSSLGLVTDFKVCYHTYDKQYEIDQLKVFAKMINEGLVYQDYKPIYWSWSSKSVLSDAEIEYKETKSPSIYVTFKTLDNEVIGKDVNLVIWTTTPWTLPSNLAISVHPELEYTLFEVNGQKYLVGSNLYEQLIAKFNFENPKVIQKLKGSSLDKIKYQHCLYDQITGIVVLGEHVSDSDGTGLVHTAPGFGLEDFIVCKKYGIDAYVPINDEGCFDQTVHDPELVGVFYDDANKLIAQKLEARNCLLSLNFINHQAAHDWRTKKPVIYRATKQWFINIKSIKNQLVENINTVKYPNERYAKRMLSMVAERSDWCISRQRTWGLPIPIIFDENHEPILDKELIDNTLRIMEAEGIKAWYEHDAKYFLTNKYDPRKTYYKESDILDVWFDSGTSFNVLKENGIKDKATIYFEGSDQYRGWFNSSMICATVLNKTAPYKELISHGFTLDEKGMKMSKSQGNVISPLTIIKNKGADILRLWAASIDYSNDHRIGNHIIEQNSEIYRKIRNSLFRYILGNLNDFDFKPLDQYQLSLADLLTINHVNKSFKKIDQAYLNYDYLEITKEVNQMVVELSAWYFELIKDSLYCNDENDPTRKAIQATLNYIFINSLFRIAPILVHTAEEAYSHYQATNKEKSVYLIDPPALFEIKTDLDLDQLATEFSKLKDDVYAEIEKLRKDKVLAKSNEAVVYLSKQYLDINKHLVKQLKTWLNVAEVHFTKNDQITVEKTDFSKCLRCWNYFKELSKNNNEVCQRCSELV.

Positions 59 to 69 (PYANGDIHVGH) match the 'HIGH' region motif. E552 contacts L-isoleucyl-5'-AMP. The 'KMSKS' region signature appears at 593-597 (KMSKS). K596 contributes to the ATP binding site. Positions 872, 875, 890, and 893 each coordinate Zn(2+).

It belongs to the class-I aminoacyl-tRNA synthetase family. IleS type 1 subfamily. As to quaternary structure, monomer. The cofactor is Zn(2+).

It is found in the cytoplasm. It carries out the reaction tRNA(Ile) + L-isoleucine + ATP = L-isoleucyl-tRNA(Ile) + AMP + diphosphate. Its function is as follows. Catalyzes the attachment of isoleucine to tRNA(Ile). As IleRS can inadvertently accommodate and process structurally similar amino acids such as valine, to avoid such errors it has two additional distinct tRNA(Ile)-dependent editing activities. One activity is designated as 'pretransfer' editing and involves the hydrolysis of activated Val-AMP. The other activity is designated 'posttransfer' editing and involves deacylation of mischarged Val-tRNA(Ile). This chain is Isoleucine--tRNA ligase, found in Mycoplasmoides gallisepticum (strain R(low / passage 15 / clone 2)) (Mycoplasma gallisepticum).